The chain runs to 254 residues: Alcohol dehydrogenase (254 aa).

10–33 (FVAGLGGIGLDTSRELVKRDLKNL) serves as a coordination point for NAD(+). Ser138 provides a ligand contact to substrate. The active-site Proton acceptor is Tyr151.

Belongs to the short-chain dehydrogenases/reductases (SDR) family. Homodimer.

The enzyme catalyses a primary alcohol + NAD(+) = an aldehyde + NADH + H(+). It carries out the reaction a secondary alcohol + NAD(+) = a ketone + NADH + H(+). The sequence is that of Alcohol dehydrogenase (Adh) from Drosophila madeirensis (Fruit fly).